Consider the following 355-residue polypeptide: Aromatic amino acid aminotransferase (355 aa).

Lys-217 is modified (N6-(pyridoxal phosphate)lysine).

Belongs to the class-II pyridoxal-phosphate-dependent aminotransferase family. As to quaternary structure, homodimer. Requires pyridoxal 5'-phosphate as cofactor.

The enzyme catalyses an aromatic L-alpha-amino acid + 2-oxoglutarate = an aromatic oxo-acid + L-glutamate. Functionally, aminotransferase that catalyzes the conversion of aromatic amino acids and 2-oxoglutarate into corresponding aromatic oxo acids and L-glutamate. The sequence is that of Aromatic amino acid aminotransferase from Mycolicibacterium paratuberculosis (strain ATCC BAA-968 / K-10) (Mycobacterium paratuberculosis).